We begin with the raw amino-acid sequence, 598 residues long: Proline--tRNA ligase (598 aa).

This sequence belongs to the class-II aminoacyl-tRNA synthetase family. ProS type 1 subfamily. Homodimer.

The protein localises to the cytoplasm. It catalyses the reaction tRNA(Pro) + L-proline + ATP = L-prolyl-tRNA(Pro) + AMP + diphosphate. In terms of biological role, catalyzes the attachment of proline to tRNA(Pro) in a two-step reaction: proline is first activated by ATP to form Pro-AMP and then transferred to the acceptor end of tRNA(Pro). As ProRS can inadvertently accommodate and process non-cognate amino acids such as alanine and cysteine, to avoid such errors it has two additional distinct editing activities against alanine. One activity is designated as 'pretransfer' editing and involves the tRNA(Pro)-independent hydrolysis of activated Ala-AMP. The other activity is designated 'posttransfer' editing and involves deacylation of mischarged Ala-tRNA(Pro). The misacylated Cys-tRNA(Pro) is not edited by ProRS. The protein is Proline--tRNA ligase of Rippkaea orientalis (strain PCC 8801 / RF-1) (Cyanothece sp. (strain PCC 8801)).